Reading from the N-terminus, the 368-residue chain is Trans-enoyl reductase TwmE (368 aa).

49–52 provides a ligand contact to NADP(+); sequence SDYK. 135 to 142 is a binding site for substrate; it reads FKAATLGT. NADP(+) contacts are provided by residues 204-207, Y222, and 269-270; these read SPRS and LE. 290 to 294 is a binding site for substrate; the sequence is SAELY. 360-361 contacts NADP(+); it reads HP.

This sequence belongs to the zinc-containing alcohol dehydrogenase family. As to quaternary structure, monomer.

It participates in secondary metabolite biosynthesis. Trans-enoyl reductase; part of the gene cluster that mediates the biosynthesis of wortmanamides A and B, reduced long-chain polyketides amidated with a specific omega-amino acid, 5-aminopentanoic acid (5PA). The PKS modules of TwmB are involved in the synthesis of the polyketide backbone, whereas the non-canonical C domain of TwmB is a bonafide condensation domain that specifically selects 5PA and catalyzes amidation to release polyketide chain. The C domain clearly prefers C16 and C18 fatty acyl substrates, which is consistent with simultaneous formation of both octaketide and nonaketide acyl amides wortmanamides A and B. Because TwmB lacks a designated enoylreductase (ER) domain, the required activity is provided the enoyl reductase TwmE. The roles of the remaining enzymes have still to be clarified. This is Trans-enoyl reductase TwmE from Talaromyces wortmannii (Penicillium wortmannii).